The following is a 1659-amino-acid chain: MATDGASCEPDLSRAPEDAAGAAAEAAKKEFDVDTLSKSELRMLLSVMEGELEARDLVIEALRARRKEVFIQERYGRFNLNDPFLALQRDYEAGAGDKEKKPVCTNPLSILEAVMAHCRKMQERMSAQLAAAESRQKKLEMEKLQLQALEQEHKKLAARLEEERGKNKQVVLMLVKECKQLSGKVIEEAQKLEDVMAKLEEEKKKTNELEEELSAEKQRSTEMEAQMEKQLSEFDTEREQLRAKLNREEAHTTDLKEEIDKMKKMIEQLKRGSDSKPSLSLPRKTKDRRLVSISVGTEGTVTRSVACQTDLVTESADHVKKLPLTMPVKPSTGSPLASANAKGSAAMARPGIDRQTSHGDLIGVSVPAFPPSSANRIEENGPSTGLTPDPTSSTPPLPGNAAPPTAQTPGITPQNSQAPPMHSLHSPCANASLHPGLNPRIQAARFRFQGNANDPDQNGNTTQSPPSRDVSPTSRDNLVAKQLARNTVTQALSRFTGPQAGAPPRPGAPPTGDVSTHHSVGRTGVKTHGVARVDRGNPPPIPPKKPGLSQTPSPPHPQLKVIIDSSRASNTGAKGDNKTVASPPSSLPQGNRVINEENLPKSSSPQLPPKPSIDLTVAPAGCTVSALATSQVGAWPAATPGLNQPACSGSSLAIPTTIAFCSSINPVSASSCRPGASDSLLVTASGWSPSLTPLLMSGGPAPLAGRPTLLQQAAAQGNVTLLLMLLNEEGLDINYSCEDGHSALYSAAKNGHTDCVRLLLSAEAQVNAADKNGFTPLCAAAAQGHFECVELLIAYDANINHAADGGQTPLYLACKNGNKECIKLLLEAGTDRNVKTTDGWTPVHAAVDTGNVDSLKLLMYHRVPAHGNSFSEEESESGVFDLDGGGESPEGKSKPVVTADFINHANREGWTAAHIAASKGFKNCLEILCRHGGLETERRDKCNRTVHDVATDDCKHLLENLNALKIPLRISVGEIEPSNYGSDDFECENTICTLNIRKQTSWDDFSKAVSQALTNHFQAISSDGWWSLEDVTCNNSTDSNIGLSSRSIRSITLGNVPWSVGQSFLQSPWDFMMKNKAEHITVLLSGPQEGCLSSVTYASMIPLQMMQNYLRLVEQYHNVIFHGPEGSLQDYIVRQLALCLKHRQMAAGFSCEIVRAEVDAGFSKKQLLDLFISSACLIPVKQSPVKKKIIIILENLEKSSLSELLRDFLAPLENRSAESPCTFQKGNGMSECYYFHENCFLMGTIAKACLQGSDLLVQQHFRWVQLRWDGEPMQGLLQRFLRRKVVNKFRGQVPPPCDPVCKIVDWALSVWRQLNSCLARLGTPEALLGPKYFLSCPVVPGHAQVTVKWMSKLWNGVITPRVQEAILSRASVKRQPGLGQTTAKRHPSQGQQAVVKAALSILLNKAVLHGCPLPRAELEQHRADFKGGSFPLSIVASYNSCSKKKGESGAWRKVNTSPRRKSGRFSLPTWNKPDLSTEGIKSKTLSQLNCNRNASLSKQKSLENDVSLTLNLDQRLSLGSDDEADLVKELQSMCSSKSESDISKIADSRDDLRMFDSAGNNPVFSAAINNLRMPVSQKEVCPLSSHQTTECSNSKSKTELGVSRVKSFLPVPRSKVTQCSQNTKRNSSSSNTRQIEINNNSKEENWNLHKNEHLEKPNK.

A disordered region spans residues 1–23 (MATDGASCEPDLSRAPEDAAGAA). A coiled-coil region spans residues 119-276 (RKMQERMSAQ…EQLKRGSDSK (158 aa)). Disordered stretches follow at residues 324-436 (LTMP…LHPG) and 450-474 (GNANDPDQNGNTTQSPPSRDVSPTS). Composition is skewed to low complexity over residues 337 to 348 (ASANAKGSAAMA) and 381 to 392 (GPSTGLTPDPTS). A compositionally biased stretch (polar residues) spans 405 to 418 (TAQTPGITPQNSQA). Asymmetric dimethylarginine is present on Arg494. The disordered stretch occupies residues 495 to 612 (FTGPQAGAPP…SSPQLPPKPS (118 aa)). Residues 579-589 (TVASPPSSLPQ) are compositionally biased toward polar residues. ANK repeat units lie at residues 705–735 (GRPTLLQQAAAQGNVTLLLMLLNEEGLDINY), 739–768 (DGHSALYSAAKNGHTDCVRLLLSAEAQVNA), 772–801 (NGFTPLCAAAAQGHFECVELLIAYDANINH), 805–834 (GGQTPLYLACKNGNKECIKLLLEAGTDRNV), and 838–867 (DGWTPVHAAVDTGNVDSLKLLMYHRVPAHG). The interval 869–893 (SFSEEESESGVFDLDGGGESPEGKS) is disordered. One copy of the ANK 6 repeat lies at 908–938 (EGWTAAHIAASKGFKNCLEILCRHGGLETER). Residues 1443 to 1478 (KKKGESGAWRKVNTSPRRKSGRFSLPTWNKPDLSTE) are disordered. Position 1520 is a phosphoserine (Ser1520). The disordered stretch occupies residues 1613–1659 (RSKVTQCSQNTKRNSSSSNTRQIEINNNSKEENWNLHKNEHLEKPNK). Positions 1620 to 1634 (SQNTKRNSSSSNTRQ) are enriched in low complexity. Positions 1641-1659 (SKEENWNLHKNEHLEKPNK) are enriched in basic and acidic residues.

As to quaternary structure, interacts with CTTN/cortactin SH3 domain. Interacts with STRN, STRN4/zinedin and MOB4/phocein; this interactions mediate the association with the STRIPAK core complex and may regulate dendritic spine distribution of the STRIPAK complex in hippocampal neurons. Activation of glutamate receptors weakens the interaction with STRN and STRN4.

The protein resides in the cytoplasm. It localises to the cell cortex. Its subcellular location is the cell projection. The protein localises to the dendritic spine. Regulates the dendritic spine distribution of CTTN/cortactin in hippocampal neurons, and thus controls dendritic spinogenesis and dendritic spine maintenance. Associates with the striatin-interacting phosphatase and kinase (STRIPAK) core complex to regulate dendritic spine distribution of the STRIPAK complex in hippocampal neurons. The protein is Cortactin-binding protein 2 (CTTNBP2) of Saimiri boliviensis boliviensis (Bolivian squirrel monkey).